The chain runs to 476 residues: Phosphomethylpyrimidine synthase (476 aa).

A disordered region spans residues Met1–Asp27. Residues His7–Asp27 are compositionally biased toward basic and acidic residues. Substrate is bound by residues Asn67, Met96, Tyr125, His160, Ser180–Gly182, Asp221–Arg224, and Glu260. His264 provides a ligand contact to Zn(2+). Tyr287 lines the substrate pocket. His328 lines the Zn(2+) pocket. Cys408, Cys411, and Cys416 together coordinate [4Fe-4S] cluster. Positions Arg425–Asp476 are disordered. Over residues Glu436–Ala447 the composition is skewed to low complexity.

Belongs to the ThiC family. The cofactor is [4Fe-4S] cluster.

The catalysed reaction is 5-amino-1-(5-phospho-beta-D-ribosyl)imidazole + S-adenosyl-L-methionine = 4-amino-2-methyl-5-(phosphooxymethyl)pyrimidine + CO + 5'-deoxyadenosine + formate + L-methionine + 3 H(+). The protein operates within cofactor biosynthesis; thiamine diphosphate biosynthesis. Its function is as follows. Catalyzes the synthesis of the hydroxymethylpyrimidine phosphate (HMP-P) moiety of thiamine from aminoimidazole ribotide (AIR) in a radical S-adenosyl-L-methionine (SAM)-dependent reaction. The sequence is that of Phosphomethylpyrimidine synthase from Halobacterium salinarum (strain ATCC 29341 / DSM 671 / R1).